Consider the following 523-residue polypeptide: Beta-glucosidase 31 (523 aa).

The N-terminal stretch at 1-22 is a signal peptide; sequence MTPARVVFICCVVLLAAAAAAA. A beta-D-glucoside contacts are provided by residues Gln-49, His-149, and 194 to 195; that span reads NE. Residue Glu-195 is the Proton donor of the active site. Cys-214 and Cys-223 are joined by a disulfide. The N-linked (GlcNAc...) asparagine glycan is linked to Asn-227. Positions 339 and 413 each coordinate a beta-D-glucoside. The Nucleophile role is filled by Glu-413. Asn-450 carries N-linked (GlcNAc...) asparagine glycosylation. Residues Trp-460, 467–468, and Phe-476 contribute to the a beta-D-glucoside site; that span reads EY.

The protein belongs to the glycosyl hydrolase 1 family.

It catalyses the reaction Hydrolysis of terminal, non-reducing beta-D-glucosyl residues with release of beta-D-glucose.. The protein is Beta-glucosidase 31 (BGLU31) of Oryza sativa subsp. japonica (Rice).